The following is a 391-amino-acid chain: Elongation factor Tu (391 aa).

Positions 10–201 (KPHVNIGTIG…AVDEYIPTPA (192 aa)) constitute a tr-type G domain. Residues 19–26 (GHVDHGKT) form a G1 region. 19–26 (GHVDHGKT) is a binding site for GTP. A Mg(2+)-binding site is contributed by T26. The G2 stretch occupies residues 55–59 (GITIS). Residues 76–79 (DCPG) form a G3 region. GTP-binding positions include 76-80 (DCPGH) and 131-134 (NKVD). Residues 131 to 134 (NKVD) are G4. Positions 169 to 171 (SAL) are G5.

The protein belongs to the TRAFAC class translation factor GTPase superfamily. Classic translation factor GTPase family. EF-Tu/EF-1A subfamily. In terms of assembly, monomer.

The protein localises to the cytoplasm. It carries out the reaction GTP + H2O = GDP + phosphate + H(+). GTP hydrolase that promotes the GTP-dependent binding of aminoacyl-tRNA to the A-site of ribosomes during protein biosynthesis. The polypeptide is Elongation factor Tu (Ruegeria pomeroyi (strain ATCC 700808 / DSM 15171 / DSS-3) (Silicibacter pomeroyi)).